The primary structure comprises 238 residues: MAVVTLSEMMEAGAHFGHQTRRWNPKMSRYIYCARNGVHIIDLVKTAVCMNSAYKWTRNAAKSGKRFLFVGTKKQASEVVALEANRCGASYVNQRWLGGMLTNWTTMKARIDRLKDLERMESSGAIAMRPKKEASVLRHELERLQKYLGGLKGMKRLPDVVVLVDQRRETNAVLEARKLDIPLVSMLDTNCDPDLCEVPIPCNDDAVRSVQLILGRLADAINEGRHGSNEHRGGQRLK.

This sequence belongs to the universal ribosomal protein uS2 family.

This is Small ribosomal subunit protein uS2 from Prochlorococcus marinus (strain MIT 9211).